Reading from the N-terminus, the 498-residue chain is Probable cytosol aminopeptidase (498 aa).

Residues Lys267 and Asp272 each contribute to the Mn(2+) site. Lys279 is an active-site residue. Mn(2+) contacts are provided by Asp290, Asp349, and Glu351. Arg353 is an active-site residue.

The protein belongs to the peptidase M17 family. Requires Mn(2+) as cofactor.

The protein resides in the cytoplasm. It carries out the reaction Release of an N-terminal amino acid, Xaa-|-Yaa-, in which Xaa is preferably Leu, but may be other amino acids including Pro although not Arg or Lys, and Yaa may be Pro. Amino acid amides and methyl esters are also readily hydrolyzed, but rates on arylamides are exceedingly low.. The catalysed reaction is Release of an N-terminal amino acid, preferentially leucine, but not glutamic or aspartic acids.. Its function is as follows. Presumably involved in the processing and regular turnover of intracellular proteins. Catalyzes the removal of unsubstituted N-terminal amino acids from various peptides. In Dechloromonas aromatica (strain RCB), this protein is Probable cytosol aminopeptidase.